A 596-amino-acid chain; its full sequence is DNA mismatch repair protein MutL (596 aa).

It belongs to the DNA mismatch repair MutL/HexB family.

In terms of biological role, this protein is involved in the repair of mismatches in DNA. It is required for dam-dependent methyl-directed DNA mismatch repair. May act as a 'molecular matchmaker', a protein that promotes the formation of a stable complex between two or more DNA-binding proteins in an ATP-dependent manner without itself being part of a final effector complex. This Leptospira borgpetersenii serovar Hardjo-bovis (strain JB197) protein is DNA mismatch repair protein MutL.